We begin with the raw amino-acid sequence, 314 residues long: 4-hydroxy-3-methylbut-2-enyl diphosphate reductase (314 aa).

A [4Fe-4S] cluster-binding site is contributed by C12. Residues H43 and H81 each coordinate (2E)-4-hydroxy-3-methylbut-2-enyl diphosphate. Residues H43 and H81 each contribute to the dimethylallyl diphosphate site. Residues H43 and H81 each coordinate isopentenyl diphosphate. C103 contributes to the [4Fe-4S] cluster binding site. H131 is a binding site for (2E)-4-hydroxy-3-methylbut-2-enyl diphosphate. A dimethylallyl diphosphate-binding site is contributed by H131. Position 131 (H131) interacts with isopentenyl diphosphate. The active-site Proton donor is the E133. (2E)-4-hydroxy-3-methylbut-2-enyl diphosphate is bound at residue T170. Residue C198 coordinates [4Fe-4S] cluster. Residues S226, N228, and S271 each coordinate (2E)-4-hydroxy-3-methylbut-2-enyl diphosphate. Dimethylallyl diphosphate is bound by residues S226, N228, and S271. Positions 226, 228, and 271 each coordinate isopentenyl diphosphate.

It belongs to the IspH family. The cofactor is [4Fe-4S] cluster.

It catalyses the reaction isopentenyl diphosphate + 2 oxidized [2Fe-2S]-[ferredoxin] + H2O = (2E)-4-hydroxy-3-methylbut-2-enyl diphosphate + 2 reduced [2Fe-2S]-[ferredoxin] + 2 H(+). The enzyme catalyses dimethylallyl diphosphate + 2 oxidized [2Fe-2S]-[ferredoxin] + H2O = (2E)-4-hydroxy-3-methylbut-2-enyl diphosphate + 2 reduced [2Fe-2S]-[ferredoxin] + 2 H(+). The protein operates within isoprenoid biosynthesis; dimethylallyl diphosphate biosynthesis; dimethylallyl diphosphate from (2E)-4-hydroxy-3-methylbutenyl diphosphate: step 1/1. Its pathway is isoprenoid biosynthesis; isopentenyl diphosphate biosynthesis via DXP pathway; isopentenyl diphosphate from 1-deoxy-D-xylulose 5-phosphate: step 6/6. Its function is as follows. Catalyzes the conversion of 1-hydroxy-2-methyl-2-(E)-butenyl 4-diphosphate (HMBPP) into a mixture of isopentenyl diphosphate (IPP) and dimethylallyl diphosphate (DMAPP). Acts in the terminal step of the DOXP/MEP pathway for isoprenoid precursor biosynthesis. The chain is 4-hydroxy-3-methylbut-2-enyl diphosphate reductase from Bacillus velezensis (strain DSM 23117 / BGSC 10A6 / LMG 26770 / FZB42) (Bacillus amyloliquefaciens subsp. plantarum).